The primary structure comprises 281 residues: NADPH-dependent 7-cyano-7-deazaguanine reductase (281 aa).

Position 88 to 90 (88 to 90 (IES)) interacts with substrate. 90-91 (SK) lines the NADPH pocket. Catalysis depends on Cys-189, which acts as the Thioimide intermediate. Catalysis depends on Asp-196, which acts as the Proton donor. 228–229 (HE) lines the substrate pocket. Residue 257–258 (RG) participates in NADPH binding.

It belongs to the GTP cyclohydrolase I family. QueF type 2 subfamily. Homodimer.

The protein localises to the cytoplasm. It catalyses the reaction 7-aminomethyl-7-carbaguanine + 2 NADP(+) = 7-cyano-7-deazaguanine + 2 NADPH + 3 H(+). Its pathway is tRNA modification; tRNA-queuosine biosynthesis. Functionally, catalyzes the NADPH-dependent reduction of 7-cyano-7-deazaguanine (preQ0) to 7-aminomethyl-7-deazaguanine (preQ1). The polypeptide is NADPH-dependent 7-cyano-7-deazaguanine reductase (Yersinia pseudotuberculosis serotype O:1b (strain IP 31758)).